Reading from the N-terminus, the 223-residue chain is Sporulation-specific protein 19 (223 aa).

Residues Met1–Gly20 form the signal peptide. Asn198 is lipidated: GPI-anchor amidated asparagine. Positions Ala199–Tyr223 are cleaved as a propeptide — removed in mature form.

In terms of processing, the GPI-anchor is attached to the protein in the endoplasmic reticulum and serves to target the protein to the cell surface. There, the glucosamine-inositol phospholipid moiety is cleaved off and the GPI-modified mannoprotein is covalently attached via its lipidless GPI glycan remnant to the 1,6-beta-glucan of the outer cell wall layer.

The protein resides in the secreted. The protein localises to the cell wall. It is found in the membrane. Involved in sporulation. Essential for completion of the nuclear division. The chain is Sporulation-specific protein 19 (SPO19) from Saccharomyces cerevisiae (strain ATCC 204508 / S288c) (Baker's yeast).